Reading from the N-terminus, the 229-residue chain is Transmembrane 4 L6 family member 20 (229 aa).

Over 1–14 (MTCCEGWTSCNGFS) the chain is Lumenal. A helical transmembrane segment spans residues 15-35 (LLVLLLLGVVLNAIPLIVSLV). The Cytoplasmic portion of the chain corresponds to 36 to 44 (EEDQFSQNP). The chain crosses the membrane as a helical span at residues 45-65 (ISCFEWWFPGIIGAGLMAIPA). The Lumenal portion of the chain corresponds to 66–83 (TTMSLTARKRACCNNRTG). The chain crosses the membrane as a helical span at residues 84–104 (MFLSSLFSVITVIGALYCMLI). At 105–185 (SIQALLKGPL…HFDSEENKHR (81 aa)) the chain is on the cytoplasmic side. A helical transmembrane segment spans residues 186–206 (LIHFSVFLGLLLVGILEVLFG). Topologically, residues 207 to 229 (LSQIVIGFLGCLCGVSKRRSQIV) are lumenal.

The protein belongs to the L6 tetraspanin family. In terms of processing, glycosylated at Asn-132, Asn-148 and Asn-163 in presence of ceramide which inverts the orientation of TM4SF20 in membranes exposing these residues to the endoplasmic reticulum lumen. Cleaved by signal peptidase at Ser-14 but the peptide does not act as a signal peptide. Cleavage is inhibited by ceramide which inverts the orientation of TM4SF20 in membranes exposing the N-terminus to the cytosol and not to the endoplasmic reticulum lumen. In terms of tissue distribution, expressed in the brain, with high levels in the parietal lobe, hippocampus, pons, white matter and cerebellum.

The protein localises to the membrane. The protein resides in the endoplasmic reticulum membrane. Its function is as follows. Polytopic transmembrane protein that inhibits regulated intramembrane proteolysis (RIP) of CREB3L1, inhibiting its activation and the induction of collagen synthesis. In response to ceramide, which alters TM4SF20 membrane topology, stimulates RIP activation of CREB3L1. Ceramide reverses the direction through which transmembrane helices are translocated into the endoplasmic reticulum membrane during translation of TM4SF20, this mechanism is called 'regulated alternative translocation' (RAT) and regulates the function of the transmembrane protein. The sequence is that of Transmembrane 4 L6 family member 20 (TM4SF20) from Homo sapiens (Human).